An 823-amino-acid chain; its full sequence is Zygotic DNA replication licensing factor mcm6-A (823 aa).

A C4-type zinc finger spans residues 159 to 186 (CLDCQTLVRDVEQQFKYTQPSICRNPVC). The MCM domain occupies 347–554 (LYHNLCTSLF…TDYAIARRIV (208 aa)). 397–404 (GDPSTAKS) contributes to the ATP binding site. The Arginine finger motif lies at 529-532 (SRFD). The segment at 663–710 (PDVNLDQDDEHEPEDETQEGTNGDAEVPNGVNGHVNGINGHSQESNAA) is disordered. Over residues 667 to 680 (LDQDDEHEPEDETQ) the composition is skewed to acidic residues. The span at 691-703 (NGVNGHVNGINGH) shows a compositional bias: low complexity.

The protein belongs to the MCM family. Component of the mcm2-7 complex (RLF-M). The complex forms a toroidal hexameric ring with the proposed subunit order mcm2-mcm6-mcm4-mcm7-mcm3-mcm5 (By simililarity). Begins to associate with zmcm3, mcm4 and mcm7 into mcm complexes at the neurula stage. May replace mmcm6 in the complex that functions during licensing of DNA replication.

The protein localises to the nucleus. The catalysed reaction is ATP + H2O = ADP + phosphate + H(+). Acts as a component of the mcm2-7 complex (mcm complex) which is the putative replicative helicase essential for 'once per cell cycle' DNA replication initiation and elongation in eukaryotic cells. The active ATPase sites in the mcm2-7 ring are formed through the interaction surfaces of two neighboring subunits such that a critical structure of a conserved arginine finger motif is provided in trans relative to the ATP-binding site of the Walker A box of the adjacent subunit. The six ATPase active sites, however, are likely to contribute differentially to the complex helicase activity. The existence of maternal and zygotic forms of mcm3 and mcm6 suggests that specific forms of mcm2-7 complexes may be used during different stages of development. May replace mmcm6 in the mcm2-7 complex. This chain is Zygotic DNA replication licensing factor mcm6-A (zmcm6-a), found in Xenopus laevis (African clawed frog).